A 239-amino-acid polypeptide reads, in one-letter code: Ribosomal RNA small subunit methyltransferase G (239 aa).

S-adenosyl-L-methionine-binding positions include glycine 78, phenylalanine 83, 129 to 130 (AE), and arginine 148.

Belongs to the methyltransferase superfamily. RNA methyltransferase RsmG family.

The protein resides in the cytoplasm. Specifically methylates the N7 position of a guanine in 16S rRNA. The chain is Ribosomal RNA small subunit methyltransferase G from Clostridium beijerinckii (strain ATCC 51743 / NCIMB 8052) (Clostridium acetobutylicum).